Reading from the N-terminus, the 213-residue chain is Macrodontain-1 (213 aa).

3 cysteine pairs are disulfide-bonded: Cys23–Cys63, Cys57–Cys96, and Cys153–Cys201. The active site involves Cys26. Catalysis depends on residues His159 and Asn176.

In terms of assembly, monomer. In terms of tissue distribution, fruits.

With respect to regulation, inhibited by the general cysteine protease inhibitor E64 (L-trans-epoxysuccinyl-leucylamide-(4-guanido)-butane). Its function is as follows. Cysteine protease that catalyzes the preferential cleavage: Ala-|-Xaa &gt; Gln-|-Xaa &gt; Tyr-Xaa &gt;&gt; Leu-|-Xaa &gt; Gly-|-Xaa. Hydrolyzes the synthetic peptide substrate Bz-Phe-Val-Arg-pNA. In Ananas macrodontes (False pineapple), this protein is Macrodontain-1.